Consider the following 80-residue polypeptide: CLAVATA3/ESR (CLE)-related protein 4 (80 aa).

Positions 1 to 22 (MASFKLWVCLILLLLEFSVHQC) are cleaved as a signal peptide. The interval 55–80 (SKDGQTVLGTLDSKRLSPGGPDPRHH) is disordered. P72 and P75 each carry hydroxyproline. P75 carries O-linked (Ara...) hydroxyproline glycosylation.

It belongs to the CLV3/ESR signal peptide family. In terms of processing, the O-glycosylation (arabinosylation) of the hydroxyproline Pro-75 enhances binding affinity of the CLE4p peptide for its receptor. Expressed in roots and seedlings.

Its subcellular location is the secreted. It localises to the extracellular space. In terms of biological role, extracellular signal peptide that regulates cell fate. The chain is CLAVATA3/ESR (CLE)-related protein 4 from Arabidopsis thaliana (Mouse-ear cress).